Here is a 284-residue protein sequence, read N- to C-terminus: Nucleoid occlusion protein (284 aa).

The segment at residues 143 to 162 is a DNA-binding region (H-T-H motif); sequence EALAQRVGKSQSAIANKMRL.

It belongs to the ParB family.

It localises to the cytoplasm. Its subcellular location is the nucleoid. Effects nucleoid occlusion by binding relatively nonspecifically to DNA and preventing the assembly of the division machinery in the vicinity of the nucleoid, especially under conditions that disturb the cell cycle. It helps to coordinate cell division and chromosome segregation by preventing the formation of the Z ring through the nucleoid, which would cause chromosome breakage. In Listeria innocua serovar 6a (strain ATCC BAA-680 / CLIP 11262), this protein is Nucleoid occlusion protein.